An 86-amino-acid polypeptide reads, in one-letter code: Large ribosomal subunit protein bL27 (86 aa).

Positions 1–10 are enriched in gly residues; it reads MAQKKGGGST. The tract at residues 1 to 20 is disordered; that stretch reads MAQKKGGGSTRNGRDSESKR.

Belongs to the bacterial ribosomal protein bL27 family.

The chain is Large ribosomal subunit protein bL27 from Bordetella avium (strain 197N).